We begin with the raw amino-acid sequence, 470 residues long: Chitin deacetylase 1 (470 aa).

An N-terminal signal peptide occupies residues 1 to 19; the sequence is MFTFAAFSALLISLAGVVA. 2 N-linked (GlcNAc...) asparagine glycosylation sites follow: Asn101 and Asn121. Cys155 and Cys363 form a disulfide bridge. Residues 159 to 358 form the NodB homology domain; it reads NVWGLSYDDG…VLANGTYQLK (200 aa). The active-site Proton acceptor is Asp166. Asp166 is a binding site for acetate. Co(2+) is bound by residues Asp167, His216, and His220. Tyr257 serves as a coordination point for acetate. His331 serves as the catalytic Proton donor. Residues Asn352, Asn378, and Asn440 are each glycosylated (N-linked (GlcNAc...) asparagine). Residues 406–447 form a disordered region; it reads EVSAPSEATGSTAAGSAASTTSGSGASASTGAASNTSSSGSG. Over residues 408 to 447 the composition is skewed to low complexity; it reads SAPSEATGSTAAGSAASTTSGSGASASTGAASNTSSSGSG. Ser444 carries the GPI-anchor amidated serine lipid modification. A propeptide spans 445 to 470 (removed in mature form); sequence GSGRSATMGGALIALAAVAVGMVYVA.

Belongs to the polysaccharide deacetylase family. Co(2+) serves as cofactor.

The protein resides in the secreted. The protein localises to the cell wall. It localises to the cell membrane. The enzyme catalyses [(1-&gt;4)-N-acetyl-beta-D-glucosaminyl](n) + n H2O = chitosan + n acetate. Functionally, hydrolyzes the N-acetamido groups of N-acetyl-D-glucosamine residues in chitin to form chitosan and acetate. Chitosan is required to anchor melanin to the cell wall, for maintenance of cell wall integrity, and for proper cytokinesis. Plays a major role in synthesizing cell wall chitosan during host infection; chitosan offers an advantage during infection as it is less readily detected than chitin by host immunosurveillance mechanisms. The polypeptide is Chitin deacetylase 1 (Cryptococcus neoformans var. grubii serotype A (strain H99 / ATCC 208821 / CBS 10515 / FGSC 9487) (Filobasidiella neoformans var. grubii)).